The chain runs to 91 residues: Large ribosomal subunit protein bL27 (91 aa).

Residues 1–20 (MAHKKGVGSSKNGRDSNPKY) are disordered.

This sequence belongs to the bacterial ribosomal protein bL27 family.

In Deinococcus geothermalis (strain DSM 11300 / CIP 105573 / AG-3a), this protein is Large ribosomal subunit protein bL27.